A 93-amino-acid chain; its full sequence is Large ribosomal subunit protein bL27 (93 aa).

The protein belongs to the bacterial ribosomal protein bL27 family.

This is Large ribosomal subunit protein bL27 from Trichormus variabilis (strain ATCC 29413 / PCC 7937) (Anabaena variabilis).